The chain runs to 69 residues: Large ribosomal subunit protein bL32c (69 aa).

The protein belongs to the bacterial ribosomal protein bL32 family.

The protein localises to the plastid. Its subcellular location is the chloroplast. This chain is Large ribosomal subunit protein bL32c (rpl32), found in Anthoceros angustus (Hornwort).